The primary structure comprises 350 residues: ATPase GET3 (350 aa).

26-33 (KGGVGKTT) serves as a coordination point for ATP. Asp57 is a catalytic residue. Residues Glu243 and Asn270 each contribute to the ATP site. Zn(2+) is bound by residues Cys282 and Cys285.

It belongs to the arsA ATPase family. Homodimer. Component of the Golgi to ER traffic (GET) complex, which is composed of GET1, GET2 and GET3. Within the complex, GET1 and GET2 form a heterotetramer which is stabilized by phosphatidylinositol binding and which binds to the GET3 homodimer. Interacts with the chloride channel protein GEF1.

The protein resides in the cytoplasm. It is found in the endoplasmic reticulum. Its subcellular location is the golgi apparatus. ATPase required for the post-translational delivery of tail-anchored (TA) proteins to the endoplasmic reticulum. Recognizes and selectively binds the transmembrane domain of TA proteins in the cytosol. This complex then targets to the endoplasmic reticulum by membrane-bound receptors GET1 and GET2, where the tail-anchored protein is released for insertion. This process is regulated by ATP binding and hydrolysis. ATP binding drives the homodimer towards the closed dimer state, facilitating recognition of newly synthesized TA membrane proteins. ATP hydrolysis is required for insertion. Subsequently, the homodimer reverts towards the open dimer state, lowering its affinity for the GET1-GET2 receptor, and returning it to the cytosol to initiate a new round of targeting. Cooperates with the HDEL receptor ERD2 to mediate the ATP-dependent retrieval of resident ER proteins that contain a C-terminal H-D-E-L retention signal from the Golgi to the ER. Involved in low-level resistance to the oxyanions arsenite and arsenate, and in heat tolerance. The chain is ATPase GET3 from Candida albicans (strain SC5314 / ATCC MYA-2876) (Yeast).